The following is a 127-amino-acid chain: Multifunctional methyltransferase subunit trm112 (127 aa).

The TRM112 domain maps to 2–123; it reads KVMTLNFLTC…KNGVANFLLP (122 aa).

It belongs to the TRM112 family. Heterodimer of mtq2-rmt-1/trm112, forming the eRF1 methyltransferase. Rmt-1/trm112 is necessary for the solubility and activity of the catalytic subunit mtq2. Interacts with trm11; required for full tRNA methyltransferase activity. Interacts with bud23; required for full rRNA methyltransferase activity.

Its subcellular location is the cytoplasm. It is found in the nucleus. Functionally, acts as an activator of both rRNA/tRNA and protein methyltransferases. Together with methyltransferase mtq2, required for the methylation of eRF1 on 'Gln-182'. Together with methyltransferase trm11, required for the formation of 2-methylguanosine at position 10 (m2G10) in tRNA. Together with methyltransferase bud23, required for the formation of a 7-methylguanine in 18S rRNA. Involved in biogenesis of both 40S and 60S ribosomal subunits. The protein is Multifunctional methyltransferase subunit trm112 (rmt-1) of Neurospora crassa (strain ATCC 24698 / 74-OR23-1A / CBS 708.71 / DSM 1257 / FGSC 987).